A 206-amino-acid chain; its full sequence is Peptidyl-tRNA hydrolase (206 aa).

Tyr-19 provides a ligand contact to tRNA. His-24 functions as the Proton acceptor in the catalytic mechanism. 3 residues coordinate tRNA: Phe-70, Asn-72, and Asn-118.

The protein belongs to the PTH family. Monomer.

It localises to the cytoplasm. The enzyme catalyses an N-acyl-L-alpha-aminoacyl-tRNA + H2O = an N-acyl-L-amino acid + a tRNA + H(+). Hydrolyzes ribosome-free peptidyl-tRNAs (with 1 or more amino acids incorporated), which drop off the ribosome during protein synthesis, or as a result of ribosome stalling. Functionally, catalyzes the release of premature peptidyl moieties from peptidyl-tRNA molecules trapped in stalled 50S ribosomal subunits, and thus maintains levels of free tRNAs and 50S ribosomes. This chain is Peptidyl-tRNA hydrolase, found in Synechococcus sp. (strain CC9902).